The primary structure comprises 296 residues: tRNA dimethylallyltransferase (296 aa).

2–9 (GPTASGKT) contributes to the ATP binding site. Residue 4 to 9 (TASGKT) participates in substrate binding. Interaction with substrate tRNA regions lie at residues 27–30 (DSAL), 151–155 (QRLSR), and 232–237 (RCVGYR).

The protein belongs to the IPP transferase family. In terms of assembly, monomer. Mg(2+) is required as a cofactor.

The catalysed reaction is adenosine(37) in tRNA + dimethylallyl diphosphate = N(6)-dimethylallyladenosine(37) in tRNA + diphosphate. Its function is as follows. Catalyzes the transfer of a dimethylallyl group onto the adenine at position 37 in tRNAs that read codons beginning with uridine, leading to the formation of N6-(dimethylallyl)adenosine (i(6)A). This is tRNA dimethylallyltransferase from Shewanella sp. (strain MR-7).